The sequence spans 78 residues: DNA-directed RNA polymerase subunit Rpo5 (78 aa).

It belongs to the archaeal Rpo5/eukaryotic RPB5 RNA polymerase subunit family. In terms of assembly, part of the RNA polymerase complex.

It is found in the cytoplasm. It carries out the reaction RNA(n) + a ribonucleoside 5'-triphosphate = RNA(n+1) + diphosphate. In terms of biological role, DNA-dependent RNA polymerase (RNAP) catalyzes the transcription of DNA into RNA using the four ribonucleoside triphosphates as substrates. The protein is DNA-directed RNA polymerase subunit Rpo5 of Methanococcoides burtonii (strain DSM 6242 / NBRC 107633 / OCM 468 / ACE-M).